The sequence spans 117 residues: Large ribosomal subunit protein bL20 (117 aa).

It belongs to the bacterial ribosomal protein bL20 family.

Its function is as follows. Binds directly to 23S ribosomal RNA and is necessary for the in vitro assembly process of the 50S ribosomal subunit. It is not involved in the protein synthesizing functions of that subunit. In Geobacter metallireducens (strain ATCC 53774 / DSM 7210 / GS-15), this protein is Large ribosomal subunit protein bL20.